A 282-amino-acid chain; its full sequence is Bifunctional protein FolD (282 aa).

NADP(+) is bound by residues 165-167, S190, and I231; that span reads NRS.

Belongs to the tetrahydrofolate dehydrogenase/cyclohydrolase family. Homodimer.

The catalysed reaction is (6R)-5,10-methylene-5,6,7,8-tetrahydrofolate + NADP(+) = (6R)-5,10-methenyltetrahydrofolate + NADPH. It carries out the reaction (6R)-5,10-methenyltetrahydrofolate + H2O = (6R)-10-formyltetrahydrofolate + H(+). Its pathway is one-carbon metabolism; tetrahydrofolate interconversion. Catalyzes the oxidation of 5,10-methylenetetrahydrofolate to 5,10-methenyltetrahydrofolate and then the hydrolysis of 5,10-methenyltetrahydrofolate to 10-formyltetrahydrofolate. This chain is Bifunctional protein FolD, found in Clostridium botulinum (strain 657 / Type Ba4).